The chain runs to 413 residues: Tyrosine--tRNA ligase (413 aa).

The 'HIGH' region signature appears at 60-69; sequence PTAPDIHIGH. The short motif at 244-248 is the 'KMSKS' region element; the sequence is KMSKS. Lys247 serves as a coordination point for ATP. The S4 RNA-binding domain occupies 352–412; it reads LGIAQLLKQA…GKRRFARVTL (61 aa).

Belongs to the class-I aminoacyl-tRNA synthetase family. TyrS type 2 subfamily. As to quaternary structure, homodimer.

The protein resides in the cytoplasm. The enzyme catalyses tRNA(Tyr) + L-tyrosine + ATP = L-tyrosyl-tRNA(Tyr) + AMP + diphosphate + H(+). Its function is as follows. Catalyzes the attachment of tyrosine to tRNA(Tyr) in a two-step reaction: tyrosine is first activated by ATP to form Tyr-AMP and then transferred to the acceptor end of tRNA(Tyr). The chain is Tyrosine--tRNA ligase from Cupriavidus pinatubonensis (strain JMP 134 / LMG 1197) (Cupriavidus necator (strain JMP 134)).